Reading from the N-terminus, the 628-residue chain is uncharacterized protein (628 aa).

It belongs to the IucA/IucC family.

This is an uncharacterized protein from Sinorhizobium fredii (strain NBRC 101917 / NGR234).